We begin with the raw amino-acid sequence, 139 residues long: Protein archease (139 aa).

Ca(2+) contacts are provided by Asp12, Asp138, and Ile139.

The protein belongs to the archease family.

Its function is as follows. Activates the tRNA-splicing ligase complex by facilitating the enzymatic turnover of catalytic subunit RtcB. Acts by promoting the guanylylation of RtcB, a key intermediate step in tRNA ligation. Can also alter the NTP specificity of RtcB such that ATP, dGTP or ITP is used efficiently. The sequence is that of Protein archease from Sulfurisphaera tokodaii (strain DSM 16993 / JCM 10545 / NBRC 100140 / 7) (Sulfolobus tokodaii).